A 751-amino-acid polypeptide reads, in one-letter code: Trehalose phosphorylase (751 aa).

The propeptide occupies 1–26; it reads MSTPHHQFESKSSTAIRRRLSSSVSS. The tract at residues 1 to 28 is disordered; that stretch reads MSTPHHQFESKSSTAIRRRLSSSVSSKQ.

This sequence belongs to the glycosyltransferase group 1 family. Glycosyltransferase 4 subfamily. Homodimer. Expressed in mycelia, stipes and pilei.

The enzyme catalyses alpha,alpha-trehalose + phosphate = alpha-D-glucose + alpha-D-glucose 1-phosphate. In terms of biological role, reversibly catalyzes the synthesis and degradation of trehalose from glucose and alpha-D-glucose 1-phosphate. The equilibrium lies in the direction of trehalose synthesis. In Pleurotus sajor-caju (Oyster mushroom), this protein is Trehalose phosphorylase.